Reading from the N-terminus, the 231-residue chain is NADH-ubiquinone oxidoreductase chain 4 (231 aa).

The next 6 helical transmembrane spans lie at 1-21, 34-54, 63-85, 89-111, 128-148, and 169-189; these read PIAGSMVLAAILLKLGGYGII, MFLPFIVLALWGAVLANLTCL, IAYSSISHMGLVVATIIIQTPWG, AMALMIAHGFTSSALFCLANTTY, ILPMATTWWLLANLMNIAIPP, and TIILLGLSMLITACYSLHMLL.

This sequence belongs to the complex I subunit 4 family.

Its subcellular location is the mitochondrion membrane. It carries out the reaction a ubiquinone + NADH + 5 H(+)(in) = a ubiquinol + NAD(+) + 4 H(+)(out). Its function is as follows. Core subunit of the mitochondrial membrane respiratory chain NADH dehydrogenase (Complex I) that is believed to belong to the minimal assembly required for catalysis. Complex I functions in the transfer of electrons from NADH to the respiratory chain. The immediate electron acceptor for the enzyme is believed to be ubiquinone. The polypeptide is NADH-ubiquinone oxidoreductase chain 4 (MT-ND4) (Bothrops bilineatus (Green jararaca)).